The following is a 233-amino-acid chain: Large ribosomal subunit protein uL1 (233 aa).

Belongs to the universal ribosomal protein uL1 family. In terms of assembly, part of the 50S ribosomal subunit.

Its function is as follows. Binds directly to 23S rRNA. The L1 stalk is quite mobile in the ribosome, and is involved in E site tRNA release. Functionally, protein L1 is also a translational repressor protein, it controls the translation of the L11 operon by binding to its mRNA. The protein is Large ribosomal subunit protein uL1 of Photorhabdus laumondii subsp. laumondii (strain DSM 15139 / CIP 105565 / TT01) (Photorhabdus luminescens subsp. laumondii).